Consider the following 727-residue polypeptide: Synaptic vesicle glycoprotein 2C (727 aa).

Residues 1-57 are interaction with SYT1; the sequence is MEDSYKDRTSLMKGAKDIAREVKKQTVKKVNQAVDRAQDEYTQRSYSRFQDEEDDDD. The Cytoplasmic segment spans residues 1–154; the sequence is MEDSYKDRTS…CGHGRFQWAL (154 aa). Disordered regions lie at residues 24–84 and 109–128; these read KQTV…GHDE and VGQPKGDEYKDRRELESERR. Phosphoserine is present on residues S75 and S76. A Phosphothreonine modification is found at T79. The span at 113–128 shows a compositional bias: basic and acidic residues; sequence KGDEYKDRRELESERR. A helical transmembrane segment spans residues 155–175; it reads FFVLGMALMADGVEVFVVGFV. Topologically, residues 176–191 are extracellular; sequence LPSAETDLCIPNSGSG. Residues 192 to 212 traverse the membrane as a helical segment; it reads WLGSIVYLGMMVGAFFWGGLA. At 213-226 the chain is on the cytoplasmic side; sequence DKVGRKQSLLICMS. The helical transmembrane segment at 227–247 threads the bilayer; that stretch reads VNGFFAFLSSFVQGYGFFLFC. Residue R248 is a topological domain, extracellular. The chain crosses the membrane as a helical span at residues 249–269; that stretch reads LLSGFGIGGAIPTVFSYFAEV. Over 270–280 the chain is Cytoplasmic; that stretch reads LAREKRGEHLS. The helical transmembrane segment at 281–301 threads the bilayer; the sequence is WLCMFWMIGGIYASAMAWAII. The Extracellular segment spans residues 302–320; that stretch reads PHYGWSFSMGSAYQFHSWR. A helical membrane pass occupies residues 321-341; that stretch reads VFVIVCALPCVSSVVALTFMP. Residues 342–437 lie on the Cytoplasmic side of the membrane; it reads ESPRFLLEVG…PVRDNTIKLT (96 aa). Residues 438–458 form a helical membrane-spanning segment; the sequence is IVWFTLSFGYYGLSVWFPDVI. Residues 459–578 lie on the Extracellular side of the membrane; sequence KPLQSDEYAL…CQITFDDDYS (120 aa). A Phosphotyrosine modification is found at Y466. N-linked (GlcNAc...) asparagine glycans are attached at residues N480, N484, N534, N559, and N565. The segment at 519-563 is (Microbial infection) C.botulinum neurotoxin type A-binding; that stretch reads SCTFEDVTSVNTYFKNCTFIDTVFDNTDFEPYKFIDSEFKNCSFF. A helical membrane pass occupies residues 579-599; sequence AYWIYFVNFLGTLAVLPGNIV. The Cytoplasmic portion of the chain corresponds to 600-609; sequence SALLMDRIGR. The chain crosses the membrane as a helical span at residues 610-630; sequence LTMLGGSMVLSGISCFFLWFG. Residues 631 to 636 lie on the Extracellular side of the membrane; that stretch reads TSESMM. A helical membrane pass occupies residues 637–657; that stretch reads IGMLCLYNGLTISAWNSLDVV. Residues 658–669 lie on the Cytoplasmic side of the membrane; sequence TVELYPTDRRAT. Residues 670-690 traverse the membrane as a helical segment; sequence GFGFLNALCKAAAVLGNLIFG. Over 691–698 the chain is Extracellular; it reads SLVSITKS. Residues 699–719 traverse the membrane as a helical segment; the sequence is IPILLASTVLVCGGLVGLCLP. Topologically, residues 720–727 are cytoplasmic; it reads DTRTQVLM.

Belongs to the major facilitator superfamily. As to quaternary structure, interacts with SYT1 in a calcium-dependent manner. (Microbial infection) Interacts with C.botulinum neurotoxin type A1 and type A2 (BoNT/A, botA). Interaction is improved by glycosylation of SV2. N-glycosylated. Upon expression in a kidney cell line the most abundant glycan on Asn-534 is GlcNAc(3)Hex(5), while on Asn-559 and Asn-565 the most abundant glycan is GlcNAc2Fuc1Man3GlcNAc3Gal3. Both Asn-559 and Asn-565 have a high degree of glycan heterogeneity.

It is found in the cytoplasmic vesicle. The protein localises to the secretory vesicle. Its subcellular location is the synaptic vesicle membrane. Its function is as follows. Plays a role in the control of regulated secretion in neural and endocrine cells, enhancing selectively low-frequency neurotransmission. Positively regulates vesicle fusion by maintaining the readily releasable pool of secretory vesicles. (Microbial infection) Receptor for C.botulinum neurotoxin type A (BoNT/A, botA); the toxin probably binds via extracellular loop 4. Recognition by BoNT/A relies on both protein-protein and protein-N-glycosylation; glycosylation of Asn-559 increases its affinity for BoNT/A. Also serves as a receptor for the closely related C.botulinum neurotoxin type A2; glycosylation is not essential but enhances the interaction. In terms of biological role, (Microbial infection) Possible receptor for C.botulinum neurotoxin type D (BoNT/D, botD); note that type D does not usually infect humans. The sequence is that of Synaptic vesicle glycoprotein 2C (SV2C) from Homo sapiens (Human).